Consider the following 298-residue polypeptide: PYK10-binding protein 1 (298 aa).

A2 is subject to N-acetylalanine. Jacalin-type lectin domains follow at residues 2–142 and 152–295; these read AQKV…YFAP and AKQL…HVRP. A Phosphoserine modification is found at S20.

Belongs to the jacalin lectin family. Component of the PYK10 complex, at least composed of PYK10/BGLU23, BGLU21, BGLU22, JAL22, JAL23, PBP1/JAL30, PBP2/JAL31, JAL32, JAL33, JAL34, JAL35, GLL22 and GLL23. In terms of tissue distribution, expressed exclusively in roots.

Its subcellular location is the cytoplasm. Its function is as follows. Inhibitor-type lectin that may regulate the correct polymerization of BGLU23/PYK10 upon tissue damage. Activates BGLU21, BGLU22 and BGLU23. The sequence is that of PYK10-binding protein 1 (PBP1) from Arabidopsis thaliana (Mouse-ear cress).